Here is a 929-residue protein sequence, read N- to C-terminus: Bifunctional uridylyltransferase/uridylyl-removing enzyme (929 aa).

The segment at M1–P383 is uridylyltransferase. Positions D384 to T739 are uridylyl-removing. One can recognise an HD domain in the interval V499–L622. 2 consecutive ACT domains span residues E740–R822 and V850–P927.

Belongs to the GlnD family. Requires Mg(2+) as cofactor.

It carries out the reaction [protein-PII]-L-tyrosine + UTP = [protein-PII]-uridylyl-L-tyrosine + diphosphate. The catalysed reaction is [protein-PII]-uridylyl-L-tyrosine + H2O = [protein-PII]-L-tyrosine + UMP + H(+). With respect to regulation, uridylyltransferase (UTase) activity is inhibited by glutamine, while glutamine activates uridylyl-removing (UR) activity. Its function is as follows. Modifies, by uridylylation and deuridylylation, the PII regulatory proteins (GlnB and homologs), in response to the nitrogen status of the cell that GlnD senses through the glutamine level. Under low glutamine levels, catalyzes the conversion of the PII proteins and UTP to PII-UMP and PPi, while under higher glutamine levels, GlnD hydrolyzes PII-UMP to PII and UMP (deuridylylation). Thus, controls uridylylation state and activity of the PII proteins, and plays an important role in the regulation of nitrogen fixation and metabolism. The protein is Bifunctional uridylyltransferase/uridylyl-removing enzyme of Bradyrhizobium diazoefficiens (strain JCM 10833 / BCRC 13528 / IAM 13628 / NBRC 14792 / USDA 110).